We begin with the raw amino-acid sequence, 104 residues long: ATP-dependent Clp protease adapter protein ClpS (104 aa).

The disordered stretch occupies residues 1 to 20 (MAEETPTRSPGGAAVLDKAP).

The protein belongs to the ClpS family. As to quaternary structure, binds to the N-terminal domain of the chaperone ClpA.

In terms of biological role, involved in the modulation of the specificity of the ClpAP-mediated ATP-dependent protein degradation. This is ATP-dependent Clp protease adapter protein ClpS from Synechococcus sp. (strain CC9902).